The chain runs to 1523 residues: Dicer-like protein 1 (1523 aa).

Positions 24–38 (LNLSGERTISTTEPT) are enriched in polar residues. The disordered stretch occupies residues 24–58 (LNLSGERTISTTEPTEGNDSSSEESGDNEQISTQR). The region spanning 123–304 (LFERAKSQNT…ESATKLEVLL (182 aa)) is the Helicase ATP-binding domain. 136 to 143 (LDTGSGKT) is an ATP binding site. A DEAH box motif is present at residues 249–252 (DEAH). Residues 444–617 (LLRQKLIKYF…GIDSEIDSIL (174 aa)) form the Helicase C-terminal domain. Positions 640 to 730 (ALAILARYAS…NSVYHRRLPA (91 aa)) constitute a Dicer dsRNA-binding fold domain. Positions 879–1007 (ELLHLVHENE…VCIEPLRISA (129 aa)) constitute a PAZ domain. 2 consecutive RNase III domains span residues 1031–1190 (IALE…LSGG) and 1241–1392 (GRKV…VDSD). Mg(2+) is bound by residues E1281, D1378, and E1381. Positions 1426-1494 (TFLQNRLTNE…SEKALSVLEN (69 aa)) constitute a DRBM domain. Residues C1438, H1465, C1506, and C1508 each contribute to the Zn(2+) site.

Belongs to the helicase family. Dicer subfamily. Mg(2+) is required as a cofactor. It depends on Mn(2+) as a cofactor.

In terms of biological role, dicer-like endonuclease involved in cleaving double-stranded RNA in the RNA interference (RNAi) pathway. Produces 21 to 25 bp dsRNAs (siRNAs) which target the selective destruction of homologous RNAs leading to sequence-specific suppression of gene expression, called post-transcriptional gene silencing (PTGS). Part of a broad host defense response against viral infection and transposons. The sequence is that of Dicer-like protein 1 (dcl1) from Aspergillus oryzae (strain ATCC 42149 / RIB 40) (Yellow koji mold).